The sequence spans 217 residues: Rhicadhesin receptor (217 aa).

Positions 1 to 20 (MKLIAVLLLVVLATATTATA) are cleaved as a signal peptide. A disulfide bridge connects residues Cys30 and Cys45. N-linked (GlcNAc...) asparagine glycosylation is found at Asn50 and Asn68. The Cupin type-1 domain occupies 58–207 (SNLLVKQGAT…AFQIGTKEVQ (150 aa)). Mn(2+) is bound by residues His107, His109, Glu114, and His153.

Belongs to the germin family. Post-translationally, glycosylated.

It is found in the secreted. The protein resides in the extracellular space. Its subcellular location is the apoplast. The protein localises to the cell wall. In terms of biological role, putative receptor for bacterial rhicadhesin, an attachment protein of rhizobiaceae. The chain is Rhicadhesin receptor (GER1) from Pisum sativum (Garden pea).